Here is a 175-residue protein sequence, read N- to C-terminus: NADH-ubiquinone oxidoreductase chain 6 (175 aa).

6 consecutive transmembrane segments (helical) span residues 1–21, 25–45, 47–67, 88–108, 115–137, and 149–169; these read MMTYVVFILSIVFVIGLIGSP, SPIYGGLGLIVSGGAGCGMVL, FGGSFLGLMVFLVYLGGMLVV, VVLGAFLLGLMMEFLAVLYVL, LVFKFSGLGDWVVYGMSDFGVFS, and YGVWLVVVTGWSLFVGVVVIM.

It belongs to the complex I subunit 6 family. Core subunit of respiratory chain NADH dehydrogenase (Complex I) which is composed of 45 different subunits.

Its subcellular location is the mitochondrion inner membrane. It catalyses the reaction a ubiquinone + NADH + 5 H(+)(in) = a ubiquinol + NAD(+) + 4 H(+)(out). Its function is as follows. Core subunit of the mitochondrial membrane respiratory chain NADH dehydrogenase (Complex I) which catalyzes electron transfer from NADH through the respiratory chain, using ubiquinone as an electron acceptor. Essential for the catalytic activity and assembly of complex I. This is NADH-ubiquinone oxidoreductase chain 6 (MT-ND6) from Hippopotamus amphibius (Hippopotamus).